A 209-amino-acid chain; its full sequence is Small ribosomal subunit protein uS4 (209 aa).

A disordered region spans residues 22 to 45 (RGRNPLLRKPNPPGQHGMQRKKKS). One can recognise an S4 RNA-binding domain in the interval 93-154 (CRLDSIVYRL…KSKRLAIVTE (62 aa)).

The protein belongs to the universal ribosomal protein uS4 family. As to quaternary structure, part of the 30S ribosomal subunit. Contacts protein S5. The interaction surface between S4 and S5 is involved in control of translational fidelity.

In terms of biological role, one of the primary rRNA binding proteins, it binds directly to 16S rRNA where it nucleates assembly of the body of the 30S subunit. With S5 and S12 plays an important role in translational accuracy. This chain is Small ribosomal subunit protein uS4, found in Chlamydia trachomatis serovar L2 (strain ATCC VR-902B / DSM 19102 / 434/Bu).